A 288-amino-acid polypeptide reads, in one-letter code: NH(3)-dependent NAD(+) synthetase (288 aa).

Position 46–53 (46–53 (GISGGQDS)) interacts with ATP. A Mg(2+)-binding site is contributed by Asp52. Arg153 serves as a coordination point for deamido-NAD(+). ATP is bound at residue Thr173. Glu178 serves as a coordination point for Mg(2+). Positions 186 and 193 each coordinate deamido-NAD(+). Residues Lys202 and Thr224 each contribute to the ATP site. 273-274 (HK) is a binding site for deamido-NAD(+).

Belongs to the NAD synthetase family. In terms of assembly, homodimer.

The catalysed reaction is deamido-NAD(+) + NH4(+) + ATP = AMP + diphosphate + NAD(+) + H(+). Its pathway is cofactor biosynthesis; NAD(+) biosynthesis; NAD(+) from deamido-NAD(+) (ammonia route): step 1/1. Its function is as follows. Catalyzes the ATP-dependent amidation of deamido-NAD to form NAD. Uses ammonia as a nitrogen source. The protein is NH(3)-dependent NAD(+) synthetase of Deinococcus geothermalis (strain DSM 11300 / CIP 105573 / AG-3a).